Reading from the N-terminus, the 147-residue chain is Hemoglobin subunit beta (147 aa).

Val2 is subject to N-acetylvaline. A Globin domain is found at 3–147 (HLTGDEKAAV…VANALAHKYH (145 aa)). Phosphothreonine is present on Thr13. Position 45 is a phosphoserine (Ser45). Position 60 is an N6-acetyllysine (Lys60). His64 provides a ligand contact to heme b. An N6-acetyllysine modification is found at Lys83. His93 is a binding site for heme b. Residue Cys94 is modified to S-nitrosocysteine. Lys145 is modified (N6-acetyllysine).

Belongs to the globin family. As to quaternary structure, heterotetramer of two alpha chains and two beta chains. In terms of tissue distribution, red blood cells.

Its function is as follows. Involved in oxygen transport from the lung to the various peripheral tissues. The protein is Hemoglobin subunit beta (HBB) of Saimiri sciureus (Common squirrel monkey).